A 597-amino-acid polypeptide reads, in one-letter code: Aspartate--tRNA(Asp/Asn) ligase (597 aa).

Glutamate 172 contributes to the L-aspartate binding site. Residues 196–199 (QLFK) are aspartate. Arginine 218 is an L-aspartate binding site. ATP-binding positions include 218–220 (RDE) and glutamine 227. Histidine 454 is an L-aspartate binding site. ATP is bound at residue glutamate 488. An L-aspartate-binding site is contributed by arginine 495. 540-543 (GLDR) lines the ATP pocket.

Belongs to the class-II aminoacyl-tRNA synthetase family. Type 1 subfamily. As to quaternary structure, homodimer.

The protein resides in the cytoplasm. The catalysed reaction is tRNA(Asx) + L-aspartate + ATP = L-aspartyl-tRNA(Asx) + AMP + diphosphate. Its function is as follows. Aspartyl-tRNA synthetase with relaxed tRNA specificity since it is able to aspartylate not only its cognate tRNA(Asp) but also tRNA(Asn). Reaction proceeds in two steps: L-aspartate is first activated by ATP to form Asp-AMP and then transferred to the acceptor end of tRNA(Asp/Asn). This is Aspartate--tRNA(Asp/Asn) ligase from Chromobacterium violaceum (strain ATCC 12472 / DSM 30191 / JCM 1249 / CCUG 213 / NBRC 12614 / NCIMB 9131 / NCTC 9757 / MK).